The primary structure comprises 72 residues: MAKEDSIEMQGTILETLPNTMFRVELENGHVVIAHISGKMRKNYIRILTGDKVTVQLTPYDLTKGRIVFRAR.

Positions 1–72 (MAKEDSIEMQ…TKGRIVFRAR (72 aa)) constitute an S1-like domain.

This sequence belongs to the IF-1 family. In terms of assembly, component of the 30S ribosomal translation pre-initiation complex which assembles on the 30S ribosome in the order IF-2 and IF-3, IF-1 and N-formylmethionyl-tRNA(fMet); mRNA recruitment can occur at any time during PIC assembly.

The protein localises to the cytoplasm. One of the essential components for the initiation of protein synthesis. Stabilizes the binding of IF-2 and IF-3 on the 30S subunit to which N-formylmethionyl-tRNA(fMet) subsequently binds. Helps modulate mRNA selection, yielding the 30S pre-initiation complex (PIC). Upon addition of the 50S ribosomal subunit IF-1, IF-2 and IF-3 are released leaving the mature 70S translation initiation complex. The sequence is that of Translation initiation factor IF-1 from Shewanella amazonensis (strain ATCC BAA-1098 / SB2B).